The chain runs to 477 residues: Ribulose bisphosphate carboxylase large chain (477 aa).

Residues 1 to 2 (MS) constitute a propeptide that is removed on maturation. At P3 the chain carries N-acetylproline. The residue at position 14 (K14) is an N6,N6,N6-trimethyllysine. 2 residues coordinate substrate: N123 and T173. Residue K175 is the Proton acceptor of the active site. K177 serves as a coordination point for substrate. The Mg(2+) site is built by K201, D203, and E204. At K201 the chain carries N6-carboxylysine. H294 functions as the Proton acceptor in the catalytic mechanism. Positions 295, 327, and 379 each coordinate substrate.

Belongs to the RuBisCO large chain family. Type I subfamily. In terms of assembly, heterohexadecamer of 8 large chains and 8 small chains; disulfide-linked. The disulfide link is formed within the large subunit homodimers. Requires Mg(2+) as cofactor. In terms of processing, the disulfide bond which can form in the large chain dimeric partners within the hexadecamer appears to be associated with oxidative stress and protein turnover.

Its subcellular location is the plastid. It is found in the chloroplast. The enzyme catalyses 2 (2R)-3-phosphoglycerate + 2 H(+) = D-ribulose 1,5-bisphosphate + CO2 + H2O. It carries out the reaction D-ribulose 1,5-bisphosphate + O2 = 2-phosphoglycolate + (2R)-3-phosphoglycerate + 2 H(+). In terms of biological role, ruBisCO catalyzes two reactions: the carboxylation of D-ribulose 1,5-bisphosphate, the primary event in carbon dioxide fixation, as well as the oxidative fragmentation of the pentose substrate in the photorespiration process. Both reactions occur simultaneously and in competition at the same active site. The polypeptide is Ribulose bisphosphate carboxylase large chain (Persea americana (Avocado)).